The chain runs to 163 residues: UPF0262 protein RPD_4278 (163 aa).

Belongs to the UPF0262 family.

The chain is UPF0262 protein RPD_4278 from Rhodopseudomonas palustris (strain BisB5).